Here is a 723-residue protein sequence, read N- to C-terminus: Epidermal growth factor receptor kinase substrate 8-like protein 1 (723 aa).

The region spanning 35-164 is the PTB domain; the sequence is QYPVNHLVTF…LHNYRSGRGE (130 aa). The span at 162 to 183 shows a compositional bias: basic and acidic residues; sequence RGERRAAALRATQEELQRDRSP. Disordered regions lie at residues 162–247, 442–477, 537–589, and 609–636; these read RGER…PRGP, KQLQ…LESE, GPRL…GLDP, and LAQG…GSDA. Serine 182 carries the post-translational modification Phosphoserine. At threonine 187 the chain carries Phosphothreonine. Positions 478–537 constitute an SH3 domain; sequence TAGKWVLCNYDFQARNSSELSVKQRDVLEVLDDSRKWWKVRDPAGQEGYVPYNILTPYPG. Residues 543–552 show a composition bias toward polar residues; it reads SQSPARSLNS. Positions 553 to 568 are enriched in pro residues; sequence TPPPPPAPAPAPPPAL. The segment covering 571–580 has biased composition (basic and acidic residues); that stretch reads PRWDRPRWDS. Positions 689–719 form a coiled coil; it reads VQRSLLEDKEKVSELEAVMEKQKKKVEGEVE.

Belongs to the EPS8 family. As to quaternary structure, interacts with ABI1. Part of a complex that contains SOS1, ABI1 and EPS8L2. Associates with F-actin. Detected in placenta.

The protein resides in the cytoplasm. In terms of biological role, stimulates guanine exchange activity of SOS1. May play a role in membrane ruffling and remodeling of the actin cytoskeleton. The protein is Epidermal growth factor receptor kinase substrate 8-like protein 1 (EPS8L1) of Homo sapiens (Human).